The following is a 218-amino-acid chain: Protein GrpE (218 aa).

Positions 1 to 75 (MTTPNGMPDN…DVDPDLDGDG (75 aa)) are disordered. Basic and acidic residues predominate over residues 23–40 (SADRAEQAAEEAAARQAE). Residues 48–75 (SEEEISPELEAEINDLLSDVDPDLDGDG) show a composition bias toward acidic residues.

This sequence belongs to the GrpE family. In terms of assembly, homodimer.

The protein localises to the cytoplasm. Its function is as follows. Participates actively in the response to hyperosmotic and heat shock by preventing the aggregation of stress-denatured proteins, in association with DnaK and GrpE. It is the nucleotide exchange factor for DnaK and may function as a thermosensor. Unfolded proteins bind initially to DnaJ; upon interaction with the DnaJ-bound protein, DnaK hydrolyzes its bound ATP, resulting in the formation of a stable complex. GrpE releases ADP from DnaK; ATP binding to DnaK triggers the release of the substrate protein, thus completing the reaction cycle. Several rounds of ATP-dependent interactions between DnaJ, DnaK and GrpE are required for fully efficient folding. This Corynebacterium glutamicum (strain ATCC 13032 / DSM 20300 / JCM 1318 / BCRC 11384 / CCUG 27702 / LMG 3730 / NBRC 12168 / NCIMB 10025 / NRRL B-2784 / 534) protein is Protein GrpE.